A 1784-amino-acid polypeptide reads, in one-letter code: Sodium channel protein type 4 subunit alpha B (1784 aa).

Topologically, residues 1-130 (MARLLPPTGT…RAAIRILIHS (130 aa)) are cytoplasmic. The tract at residues 29–48 (AEEAAEQERMKEQNVKVAEE) is disordered. Residues 112-429 (CLSPFNPVRR…VVAMAYAEQN (318 aa)) form an I repeat. A helical membrane pass occupies residues 131–149 (LFSLVIMLTILTNCVFMAM). At 150–156 (SDPPGWS) the chain is on the extracellular side. A helical membrane pass occupies residues 157 to 177 (KILEYVFTGIYTFEAMVKVLS). Over 178–191 (RGFCIGDFTFLRDP) the chain is Cytoplasmic. The chain crosses the membrane as a helical span at residues 192 to 209 (WNWLDFMVISMAYLTEFV). Topologically, residues 210–215 (DLGNIS) are extracellular. An N-linked (GlcNAc...) asparagine glycan is attached at N213. Residues 216-232 (ALRTFRVLRALKTITVI) traverse the membrane as a helical segment. Residues 233–251 (PGLKTIVGALIQSVKKLAD) lie on the Cytoplasmic side of the membrane. Residues 252 to 271 (VMILTVFCLSVFALIGLQLF) traverse the membrane as a helical segment. Topologically, residues 272–366 (MGNLRQKCVL…PNYGYTSYDN (95 aa)) are extracellular. C279 and C335 are joined by a disulfide. 3 N-linked (GlcNAc...) asparagine glycosylation sites follow: N291, N304, and N337. A disulfide bridge links C344 with C350. Residues 367–391 (FGWAFLALFRLMTQDFWENLFQLTL) constitute an intramembrane region (pore-forming). Residues 392-398 (RAAGKTY) lie on the Extracellular side of the membrane. The chain crosses the membrane as a helical span at residues 399–419 (MIFFVVIIFLGSFYLINLILA). Topologically, residues 420 to 568 (VVAMAYAEQN…RIVYLFVMDP (149 aa)) are cytoplasmic. A disordered region spans residues 455-478 (EQKNGMVNGSKTSLSSKKKGDNDQ). The II repeat unit spans residues 550–821 (CCIPWVKFKR…QIAISRITRG (272 aa)). A helical membrane pass occupies residues 569–587 (FVDLGITLCIVLNTVFMAM). The Extracellular segment spans residues 588-598 (EHYPMSVHVEE). Residues 599–618 (VLAIGNLVFTGIFAAEMVLK) traverse the membrane as a helical segment. Residues 619-632 (LIALDPYYYFQVGW) lie on the Cytoplasmic side of the membrane. Residues 633–652 (NIFDSIIVTMSLVELMLADV) form a helical membrane-spanning segment. The Extracellular portion of the chain corresponds to 653-654 (EG). The helical transmembrane segment at 655-672 (LSVLRSFRLMRVFKLAKS) threads the bilayer. Topologically, residues 673 to 688 (WPTLNMLIKIIGNSVG) are cytoplasmic. A helical transmembrane segment spans residues 689–707 (ALGNLTLVLAIIVFIFAVV). Over 708-736 (GMQLFGKSYTDSVCKISSDCELPRWHMAD) the chain is Extracellular. C721 and C727 are oxidised to a cystine. Residues 737–757 (FFHAFLIIFRVLCGEWIETMW) constitute an intramembrane region (pore-forming). Residues 758-768 (DCMEVAGQGMC) are Extracellular-facing. C759 and C768 form a disulfide bridge. The helical transmembrane segment at 769–787 (IIVFMMVMVIGNLVVLNLF) threads the bilayer. Residues 788 to 973 (LALLLSSFSG…TCFAIVEHSY (186 aa)) lie on the Cytoplasmic side of the membrane. The interval 870 to 928 (PIANGESDDDDGNGSSEDEDDEGRDINMKKKNGDESSTCSTVDKPPEVEDLVEEEEEDL) is disordered. Residues 875-892 (ESDDDDGNGSSEDEDDEG) show a composition bias toward acidic residues. Residues 893-903 (RDINMKKKNGD) show a composition bias toward basic and acidic residues. A compositionally biased stretch (acidic residues) spans 917–928 (VEDLVEEEEEDL). An III repeat occupies 954–1269 (KGKAWWNFRK…KKYYNAMKKL (316 aa)). A helical transmembrane segment spans residues 974–991 (FETFIIFMILLSSGALAF). At 992-1004 (EDIYIEQRRMIKI) the chain is on the extracellular side. A helical membrane pass occupies residues 1005–1023 (ILEYADQVFTYVFVVEMLL). Residues 1024–1037 (KWVAYGFKVYFTNA) lie on the Cytoplasmic side of the membrane. A helical membrane pass occupies residues 1038 to 1056 (WCWLDFLIVDVSLISLTAN). At 1057–1064 (ILGYSELG) the chain is on the extracellular side. Residues 1065 to 1083 (AIKSLRTLRALRPLRALSR) traverse the membrane as a helical segment. At 1084–1101 (FEGMRVVVVNALVGAIPS) the chain is on the cytoplasmic side. The chain crosses the membrane as a helical span at residues 1102–1121 (IFNVLLVCLIFWLIFSIMGV). At 1122 to 1173 (NLFAGKFYYCFNETSEEVFDHNVVNNKTDCYELMEFHPEVRWMNGKINFDNV) the chain is on the extracellular side. C1131 and C1151 form a disulfide bridge. N-linked (GlcNAc...) asparagine glycosylation is found at N1133 and N1147. An intramembrane region (pore-forming) is located at residues 1174–1195 (GMGYLALLQVATFKGWMDIMYS). At 1196 to 1212 (AVDSRAIESQPVYEANL) the chain is on the extracellular side. The chain crosses the membrane as a helical span at residues 1213–1234 (YMYIYFVIFIIFGSFFTLNLFI). Residues 1235-1297 (GVIIDNFNQQ…LVFDFVTQQF (63 aa)) lie on the Cytoplasmic side of the membrane. An important for rapid channel inactivation region spans residues 1253 to 1255 (IFM). An IV repeat occupies 1278-1575 (IPRPTNCCQG…WEKFDPTASQ (298 aa)). A helical membrane pass occupies residues 1298-1315 (FDIFIMVMICLNMVTMMV). Residues 1316 to 1326 (ETDDQSAEIEE) lie on the Extracellular side of the membrane. Residues 1327 to 1345 (ILFYINFAFIILFTGECVL) traverse the membrane as a helical segment. At 1346 to 1357 (KITALRYHYFSI) the chain is on the cytoplasmic side. A helical transmembrane segment spans residues 1358–1375 (GWNIFDFVVVILSILGIG). Topologically, residues 1376 to 1388 (LADLIEKYFVSPT) are extracellular. The chain crosses the membrane as a helical span at residues 1389-1405 (LFRVIRLARIGRVLRLI). The Cytoplasmic segment spans residues 1406–1424 (RGAKGIRTLLFALMMSLPA). The chain crosses the membrane as a helical span at residues 1425 to 1442 (LFNIGLLLFLIMFIFSIF). The Extracellular portion of the chain corresponds to 1443–1464 (GMSNFAYVKKEVGIDDMMNFET). An intramembrane region (pore-forming) is located at residues 1465 to 1487 (FGNSIICMFMITTSAGWDGLLAP). Topologically, residues 1488 to 1516 (ILNSPPDCDPDVDNPGSTTRGNCGNAAVG) are extracellular. C1495 and C1510 are disulfide-bonded. Residues 1517 to 1539 (IVFFCSYIVMSFLVVVNMYIAII) form a helical membrane-spanning segment. Over 1540–1784 (LENFNVATEE…AADNLRESIV (245 aa)) the chain is Cytoplasmic. The IQ domain occupies 1669 to 1698 (EEVAASTIQRAYRSHILKRCVKQASYMYRD).

Belongs to the sodium channel (TC 1.A.1.10) family. Nav1.4/SCN4A subfamily. As to quaternary structure, voltage-gated sodium (Nav) channels consist of an ion-conducting alpha subunit which is functional on its own associated with regulatory beta subunits. Lacks the cysteine which covalently binds the conotoxin GVIIJ. This cysteine (position 719) is speculated in other sodium channel subunits alpha to be implied in covalent binding with the sodium channel subunit beta-2 or beta-4. As to expression, expressed in skeletal muscle, heart, brain, spinal cord, and eye.

It is found in the cell membrane. It carries out the reaction Na(+)(in) = Na(+)(out). Functionally, pore-forming subunit of a voltage-gated sodium (Nav) channel that directly mediates the depolarizing phase of action potentials in excitable membranes. Navs, also called VGSCs (voltage-gated sodium channels) or VDSCs (voltage-dependent sodium channels), operate by switching between closed and open conformations depending on the voltage difference across the membrane. In the open conformation they allow Na(+) ions to selectively pass through the pore, along their electrochemical gradient. The influx of Na+ ions provokes membrane depolarization, initiating the propagation of electrical signals throughout cells and tissues. The protein is Sodium channel protein type 4 subunit alpha B (scn4ab) of Danio rerio (Zebrafish).